We begin with the raw amino-acid sequence, 254 residues long: NAD-dependent protein deacylase (254 aa).

Residues 1–250 (MERLEEARKR…LPPSPEDQAE (250 aa)) enclose the Deacetylase sirtuin-type domain. 22–41 (GAGISKPSGIPTFRDAEGLW) contributes to the NAD(+) binding site. Tyr66 and Arg69 together coordinate substrate. An NAD(+)-binding site is contributed by 104–107 (QNVD). The active-site Proton acceptor is His122. Zn(2+) contacts are provided by Cys130, Cys133, Cys149, and Cys152. NAD(+)-binding positions include 189-191 (GTS), 215-217 (NPE), and Ala233.

This sequence belongs to the sirtuin family. Class III subfamily. It depends on Zn(2+) as a cofactor.

It is found in the cytoplasm. It catalyses the reaction N(6)-acetyl-L-lysyl-[protein] + NAD(+) + H2O = 2''-O-acetyl-ADP-D-ribose + nicotinamide + L-lysyl-[protein]. It carries out the reaction N(6)-succinyl-L-lysyl-[protein] + NAD(+) + H2O = 2''-O-succinyl-ADP-D-ribose + nicotinamide + L-lysyl-[protein]. In terms of biological role, NAD-dependent lysine deacetylase and desuccinylase that specifically removes acetyl and succinyl groups on target proteins. Modulates the activities of several proteins which are inactive in their acylated form. The polypeptide is NAD-dependent protein deacylase (Thermus thermophilus (strain ATCC BAA-163 / DSM 7039 / HB27)).